Reading from the N-terminus, the 269-residue chain is HTH-type transcriptional activator ArnR1 (269 aa).

The Cytoplasmic segment spans residues 1–217 (MSSMNKRVFD…LLKLTGSYRY (217 aa)). Residues 42 to 65 (TTEISQTINTSRKSIIDAIRKLVD) constitute a DNA-binding region (H-T-H motif). The chain crosses the membrane as a helical span at residues 218–238 (EIALTKVMLFNVISIPVLMYL). Residues 239-241 (KDQ) lie on the Extracellular side of the membrane. The helical transmembrane segment at 242–262 (LGILEAIWLYVIILLPLLSIF) threads the bilayer. The Cytoplasmic portion of the chain corresponds to 263–269 (AEIFNRI).

The protein localises to the cell membrane. Its function is as follows. Involved in regulation of archaellar gene expression. May activate flaB transcription upon nutrient starvation by acting on the flaB promoter. This chain is HTH-type transcriptional activator ArnR1, found in Sulfolobus acidocaldarius (strain ATCC 33909 / DSM 639 / JCM 8929 / NBRC 15157 / NCIMB 11770).